The sequence spans 258 residues: Acyl-[acyl-carrier-protein]--UDP-N-acetylglucosamine O-acyltransferase (258 aa).

This sequence belongs to the transferase hexapeptide repeat family. LpxA subfamily. As to quaternary structure, homotrimer.

The protein resides in the cytoplasm. It catalyses the reaction a (3R)-hydroxyacyl-[ACP] + UDP-N-acetyl-alpha-D-glucosamine = a UDP-3-O-[(3R)-3-hydroxyacyl]-N-acetyl-alpha-D-glucosamine + holo-[ACP]. It participates in glycolipid biosynthesis; lipid IV(A) biosynthesis; lipid IV(A) from (3R)-3-hydroxytetradecanoyl-[acyl-carrier-protein] and UDP-N-acetyl-alpha-D-glucosamine: step 1/6. Functionally, involved in the biosynthesis of lipid A, a phosphorylated glycolipid that anchors the lipopolysaccharide to the outer membrane of the cell. In Pseudomonas putida (strain GB-1), this protein is Acyl-[acyl-carrier-protein]--UDP-N-acetylglucosamine O-acyltransferase.